The sequence spans 358 residues: Probable BOI-related E3 ubiquitin-protein ligase 2 (358 aa).

Residues 171–234 adopt a coiled-coil conformation; sequence KYEIEEKRKR…NQIWRDLAQT (64 aa). The interval 214–250 is WRD domain; that stretch reads LEERVKSLSIENQIWRDLAQTNEATANHLRTNLEHVL. The RING-type zinc finger occupies 310–345; the sequence is CRNCGEEESCVLLLPCRHLCLCGVCGSSVHTCPICT.

Interacts with the DELLA proteins GAI, RGA, RGL1, RGL2 and RGL3.

It catalyses the reaction S-ubiquitinyl-[E2 ubiquitin-conjugating enzyme]-L-cysteine + [acceptor protein]-L-lysine = [E2 ubiquitin-conjugating enzyme]-L-cysteine + N(6)-ubiquitinyl-[acceptor protein]-L-lysine.. It participates in protein degradation; proteasomal ubiquitin-dependent pathway. Functionally, probable E3 ubiquitin-protein ligase. Has no effect on the stability of the DELLA proteins. This is Probable BOI-related E3 ubiquitin-protein ligase 2 (BRG2) from Arabidopsis thaliana (Mouse-ear cress).